Consider the following 359-residue polypeptide: Type-1 angiotensin II receptor (359 aa).

Over 1-25 (MILNSSTEDGIKRIQDDCPKAGRHS) the chain is Extracellular. Asparagine 4 carries an N-linked (GlcNAc...) asparagine glycan. Residues glutamine 15 and aspartate 17 each coordinate angiotensin II. Disulfide bonds link cysteine 18-cysteine 274 and cysteine 101-cysteine 180. Residues 26–55 (YIFVMIPTLYSIIFVVGIFGNSLVVIVIYF) traverse the membrane as a helical segment. The Cytoplasmic portion of the chain corresponds to 56 to 61 (YMKLKT). A helical transmembrane segment spans residues 62–89 (VASVFLLNLALADICFLLTLPLWAVYTA). Residues 90-98 (MEYRWPFGN) lie on the Extracellular side of the membrane. Residues 99-125 (YLCKIASASVSFNLYASVFLLTCLSID) form a helical membrane-spanning segment. Over 126-141 (RYLAIVHPMKSRLRRT) the chain is Cytoplasmic. A helical membrane pass occupies residues 142–165 (MLVAKVTCVIIWLMAGLASLPAVI). The Extracellular portion of the chain corresponds to 166–190 (HRNVFFIENTNITVCAFHYESQNST). Arginine 167 is a binding site for angiotensin II. N-linked (GlcNAc...) asparagine glycosylation is present at asparagine 176. Residues phenylalanine 182, histidine 183, and tyrosine 184 each contribute to the angiotensin II site. N-linked (GlcNAc...) asparagine glycosylation occurs at asparagine 188. Residues 191-216 (LPIGLGLTKNILGFMFPFLIILTSYT) form a helical membrane-spanning segment. Angiotensin II is bound at residue lysine 199. Topologically, residues 217–239 (LIWKALKKAYEIQKNKPRNDDIF) are cytoplasmic. The chain crosses the membrane as a helical span at residues 240-268 (KIIMAIVLFFFFSWVPHQIFTFLDVLIQL). The Extracellular portion of the chain corresponds to 269 to 278 (GIIHDCKISD). The helical transmembrane segment at 279–304 (IVDTAMPITICIAYFNNCLNPLFYGF) threads the bilayer. At 305 to 359 (LGKKFKKYFLQLLKYIPPKAKSHSTLSTKMSTLSYRPSDNVSSSAKKPVQCFEVE) the chain is on the cytoplasmic side. Over residues 337–349 (LSYRPSDNVSSSA) the composition is skewed to polar residues. The tract at residues 337–359 (LSYRPSDNVSSSAKKPVQCFEVE) is disordered. Residue cysteine 355 is the site of S-palmitoyl cysteine attachment.

Belongs to the G-protein coupled receptor 1 family. As to quaternary structure, interacts with MAS1. Interacts with ARRB1. Interacts with FLNA (via filamin repeat 21); increases PKA-mediated phosphorylation of FLNA. In terms of processing, C-terminal Ser or Thr residues may be phosphorylated. Expressed in liver, kidney, adrenal gland, heart and colon.

The protein localises to the cell membrane. Functionally, receptor for angiotensin II, a vasoconstricting peptide, which acts as a key regulator of blood pressure and sodium retention by the kidney. The activated receptor in turn couples to G-alpha proteins G(q) (GNAQ, GNA11, GNA14 or GNA15) and thus activates phospholipase C and increases the cytosolic Ca(2+) concentrations, which in turn triggers cellular responses such as stimulation of protein kinase C. This chain is Type-1 angiotensin II receptor (AGTR1), found in Cavia porcellus (Guinea pig).